The chain runs to 196 residues: Inosine triphosphate pyrophosphatase 2 (196 aa).

20 to 25 contributes to the ITP binding site; the sequence is TGNDGK. E48 serves as a coordination point for Mg(2+). ITP is bound by residues K61, 77–78, K94, 153–156, K177, and 182–183; these read DT, FGWD, and PR.

The protein belongs to the HAM1 NTPase family. Homodimer. Requires Mg(2+) as cofactor. It depends on Mn(2+) as a cofactor.

The protein resides in the cytoplasm. The enzyme catalyses ITP + H2O = IMP + diphosphate + H(+). It carries out the reaction dITP + H2O = dIMP + diphosphate + H(+). The catalysed reaction is XTP + H2O = XMP + diphosphate + H(+). Its function is as follows. Pyrophosphatase that hydrolyzes non-canonical purine nucleotides such as inosine triphosphate (ITP), deoxyinosine triphosphate (dITP) or xanthosine 5'-triphosphate (XTP) to their respective monophosphate derivatives. The enzyme does not distinguish between the deoxy- and ribose forms. Probably excludes non-canonical purines from RNA and DNA precursor pools, thus preventing their incorporation into RNA and DNA and avoiding chromosomal lesions. The chain is Inosine triphosphate pyrophosphatase 2 from Trypanosoma cruzi (strain CL Brener).